The following is a 180-amino-acid chain: uncharacterized protein (180 aa).

The 129-residue stretch at 35 to 163 (LRHRATYIVV…TPDSLKALAL (129 aa)) folds into the Nudix hydrolase domain. The short motif at 72–94 (GGVVQADEQLLESARREAEEELG) is the Nudix box element. Mg(2+)-binding residues include glutamate 88 and glutamate 92.

The protein belongs to the Nudix hydrolase family. Requires Mg(2+) as cofactor.

This is an uncharacterized protein from Shigella flexneri.